A 98-amino-acid polypeptide reads, in one-letter code: Integration host factor subunit alpha (98 aa).

Residues 51 to 71 form a disordered region; it reads NFDLRDKNERPGRNPKTGEDI. The segment covering 53–69 has biased composition (basic and acidic residues); the sequence is DLRDKNERPGRNPKTGE.

It belongs to the bacterial histone-like protein family. Heterodimer of an alpha and a beta chain.

In terms of biological role, this protein is one of the two subunits of integration host factor, a specific DNA-binding protein that functions in genetic recombination as well as in transcriptional and translational control. The protein is Integration host factor subunit alpha of Vibrio parahaemolyticus serotype O3:K6 (strain RIMD 2210633).